Consider the following 193-residue polypeptide: Potassium-transporting ATPase KdpC subunit (193 aa).

Residues 7–27 (PLIVVFVVLVAVTGLAYPAVM) traverse the membrane as a helical segment.

The protein belongs to the KdpC family. As to quaternary structure, the system is composed of three essential subunits: KdpA, KdpB and KdpC.

The protein resides in the cell inner membrane. Part of the high-affinity ATP-driven potassium transport (or Kdp) system, which catalyzes the hydrolysis of ATP coupled with the electrogenic transport of potassium into the cytoplasm. This subunit acts as a catalytic chaperone that increases the ATP-binding affinity of the ATP-hydrolyzing subunit KdpB by the formation of a transient KdpB/KdpC/ATP ternary complex. In Burkholderia mallei (strain NCTC 10247), this protein is Potassium-transporting ATPase KdpC subunit.